A 289-amino-acid chain; its full sequence is Secretory carrier-associated membrane protein (289 aa).

Residues 1–65 (MAGRYDPNPF…TSTDGKKKER (65 aa)) form a disordered region. The Cytoplasmic segment spans residues 1–123 (MAGRYDPNPF…EIPIHLRTLQ (123 aa)). Positions 16–31 (NPFSNPRSAASATNSR) are enriched in polar residues. Positions 59–98 (DGKKKERDLQAKEAELRKREQEVRRKEEAIARAGIVIEEK) form a coiled coil. The next 4 helical transmembrane spans lie at 124–144 (YVAFFSLLGLVLCLTWNVVSV), 156–176 (IWFLAIIYFIAGVPGAYALWY), 191–211 (FGWFFMFYLLHIGFCILAAVA), and 239–259 (IFYFIGFGFFCLETLISIWVI). Topologically, residues 260-289 (QQVYMHFRGGGKTAEMKREAALGAMGAALR) are cytoplasmic.

It belongs to the SCAMP family.

It is found in the cell membrane. Its subcellular location is the cytoplasmic vesicle. The protein resides in the secretory vesicle membrane. Its function is as follows. Probably involved in membrane trafficking. The sequence is that of Secretory carrier-associated membrane protein (PSAM2) from Pisum sativum (Garden pea).